The following is a 134-amino-acid chain: Small ribosomal subunit protein uS11 (134 aa).

The disordered stretch occupies residues 114–134; it reads SISDVTPQPHNGCRPPKRRRV.

It belongs to the universal ribosomal protein uS11 family. Part of the 30S ribosomal subunit. Interacts with proteins S7 and S18. Binds to IF-3.

In terms of biological role, located on the platform of the 30S subunit, it bridges several disparate RNA helices of the 16S rRNA. Forms part of the Shine-Dalgarno cleft in the 70S ribosome. This chain is Small ribosomal subunit protein uS11, found in Corynebacterium efficiens (strain DSM 44549 / YS-314 / AJ 12310 / JCM 11189 / NBRC 100395).